The sequence spans 101 residues: Small ribosomal subunit protein uS14 (101 aa).

It belongs to the universal ribosomal protein uS14 family. In terms of assembly, part of the 30S ribosomal subunit. Contacts proteins S3 and S10.

In terms of biological role, binds 16S rRNA, required for the assembly of 30S particles and may also be responsible for determining the conformation of the 16S rRNA at the A site. This is Small ribosomal subunit protein uS14 from Haemophilus influenzae (strain 86-028NP).